We begin with the raw amino-acid sequence, 205 residues long: uncharacterized protein (205 aa).

Belongs to the flavoredoxin family. Requires FMN as cofactor.

This is an uncharacterized protein from Bacillus subtilis (strain 168).